A 222-amino-acid polypeptide reads, in one-letter code: GTP cyclohydrolase 1 (222 aa).

Positions 111, 114, and 182 each coordinate Zn(2+).

This sequence belongs to the GTP cyclohydrolase I family. Homomer.

It carries out the reaction GTP + H2O = 7,8-dihydroneopterin 3'-triphosphate + formate + H(+). The protein operates within cofactor biosynthesis; 7,8-dihydroneopterin triphosphate biosynthesis; 7,8-dihydroneopterin triphosphate from GTP: step 1/1. This Klebsiella pneumoniae (strain 342) protein is GTP cyclohydrolase 1.